Consider the following 166-residue polypeptide: Ureidoglycolate lyase (166 aa).

This sequence belongs to the ureidoglycolate lyase family. As to quaternary structure, homodimer. Ni(2+) serves as cofactor.

The catalysed reaction is (S)-ureidoglycolate = urea + glyoxylate. The protein operates within nitrogen metabolism; (S)-allantoin degradation. Catalyzes the catabolism of the allantoin degradation intermediate (S)-ureidoglycolate, generating urea and glyoxylate. Involved in the utilization of allantoin as nitrogen source. This Agrobacterium fabrum (strain C58 / ATCC 33970) (Agrobacterium tumefaciens (strain C58)) protein is Ureidoglycolate lyase.